The chain runs to 138 residues: ATP synthase epsilon chain (138 aa).

It belongs to the ATPase epsilon chain family. As to quaternary structure, F-type ATPases have 2 components, CF(1) - the catalytic core - and CF(0) - the membrane proton channel. CF(1) has five subunits: alpha(3), beta(3), gamma(1), delta(1), epsilon(1). CF(0) has three main subunits: a, b and c.

Its subcellular location is the cell inner membrane. Produces ATP from ADP in the presence of a proton gradient across the membrane. In Blochmanniella floridana, this protein is ATP synthase epsilon chain.